A 288-amino-acid chain; its full sequence is NADPH-dependent aldehyde reductase 1, chloroplastic (288 aa).

Residues 1–18 are compositionally biased toward basic and acidic residues; sequence MASEKQKQHAQPGKEHVM. The disordered stretch occupies residues 1–32; the sequence is MASEKQKQHAQPGKEHVMESSPQFSSSDYQPS. Polar residues predominate over residues 20–32; the sequence is SSPQFSSSDYQPS. An NADP(+)-binding site is contributed by 47 to 71; sequence SGIGRAVGYCFASEGATVAFTYVKG. Ser-179 is a binding site for substrate. Tyr-192 acts as the Proton acceptor in catalysis.

Belongs to the short-chain dehydrogenases/reductases (SDR) family.

The protein resides in the plastid. It localises to the chloroplast. In terms of biological role, aldehyde reductase that catalyzes the reduction of the aldehyde carbonyl groups on saturated and alpha,beta-unsaturated aldehydes with more than 5 carbons. No activity on alpha,beta-unsaturated ketones. Can use propionaldehyde, butyraldehyde, methylglyoxal, (e)-2-pentenal, (E)-2-hexenal, (Z)-3-hexenal and (E)-2-nonenal as substrates, but not propenal (acrolein), crotonaldehyde, 2-butanone, 3-buten-2-one or 1-penten-3-one. May act as a short alcohol-polyol-sugar dehydrogenase possibly related to carbohydrate metabolism and the acquisition of desiccation tolerance. May also be involved in signal transduction. This chain is NADPH-dependent aldehyde reductase 1, chloroplastic, found in Arabidopsis thaliana (Mouse-ear cress).